The chain runs to 118 residues: Fluoride-specific ion channel FluC 1 (118 aa).

A run of 4 helical transmembrane segments spans residues 5–25 (FVLV…ISVL), 34–54 (FPFA…FLVS), 56–76 (ALGP…YTTF), and 98–118 (YLGC…MLGV). Na(+)-binding residues include G71 and T74.

Belongs to the fluoride channel Fluc/FEX (TC 1.A.43) family.

The protein resides in the cell membrane. It carries out the reaction fluoride(in) = fluoride(out). Its activity is regulated as follows. Na(+) is not transported, but it plays an essential structural role and its presence is essential for fluoride channel function. Functionally, fluoride-specific ion channel. Important for reducing fluoride concentration in the cell, thus reducing its toxicity. In Listeria monocytogenes serotype 4b (strain F2365), this protein is Fluoride-specific ion channel FluC 1.